We begin with the raw amino-acid sequence, 224 residues long: 7-cyano-7-deazaguanine synthase 1 (224 aa).

10–20 (LSGGLDSMVCA) contacts ATP. Residues Cys-189, Cys-199, Cys-202, and Cys-205 each coordinate Zn(2+).

Belongs to the QueC family. It depends on Zn(2+) as a cofactor.

The catalysed reaction is 7-carboxy-7-deazaguanine + NH4(+) + ATP = 7-cyano-7-deazaguanine + ADP + phosphate + H2O + H(+). It functions in the pathway purine metabolism; 7-cyano-7-deazaguanine biosynthesis. Its function is as follows. Catalyzes the ATP-dependent conversion of 7-carboxy-7-deazaguanine (CDG) to 7-cyano-7-deazaguanine (preQ(0)). The chain is 7-cyano-7-deazaguanine synthase 1 from Sphingopyxis alaskensis (strain DSM 13593 / LMG 18877 / RB2256) (Sphingomonas alaskensis).